Reading from the N-terminus, the 410-residue chain is Protein translocase subunit SecY (410 aa).

Transmembrane regions (helical) follow at residues 61–81 (LSVFALGIIPYINATITIQIL), 106–126 (ITKYLSFCFAFIESLAIVLRL), 135–155 (LYFIVQTTLILISGAMLVMWL), 170–190 (VIIFVNIASAFAKFLLNQLFV), 195–215 (FLDFASYFALIVFSIACIVFV), 248–268 (QGGVMPIILASSLLALVDYVI), 289–309 (ILFLLLYSAFIIFFNYLYCSL), 349–369 (LFGSGFLAFIVLAPNFLEFVF), and 373–393 (VFKGLAVSSLLIVVGVAIDLI).

Belongs to the SecY/SEC61-alpha family. Component of the plastid Sec protein translocase complex, which is composed of at least SecY and SecE.

It localises to the plastid. Its subcellular location is the chloroplast thylakoid membrane. In terms of biological role, the central subunit of the protein translocation channel SecYE. Consists of two halves formed by TMs 1-5 and 6-10. These two domains form a lateral gate at the front which open onto the bilayer between TMs 2 and 7, and are clamped together by SecE at the back. The channel is closed by both a pore ring composed of hydrophobic SecY resides and a short helix (helix 2A) on the extracellular side of the membrane which forms a plug. The sequence is that of Protein translocase subunit SecY from Cyanidium caldarium (Red alga).